The sequence spans 242 residues: Small ribosomal subunit protein uS5 (242 aa).

A compositionally biased stretch (polar residues) spans 1-14; sequence MADENSTGPGNQPE. The segment at 1–65 is disordered; that stretch reads MADENSTGPG…DRRPRDEDGG (65 aa). The segment covering 41–65 has biased composition (basic and acidic residues); it reads DGGRGGRDGGRGRRDDRRPRDEDGG. An S5 DRBM domain is found at 68-131; it reads LIEKLVHINR…AAAKKAMIRV (64 aa). Residues 204-242 are disordered; sequence EQTSPKSVAQRRGKKVSDLIKRGGASDRAAEAEAAAVTE. The span at 218 to 234 shows a compositional bias: basic and acidic residues; the sequence is KVSDLIKRGGASDRAAE.

This sequence belongs to the universal ribosomal protein uS5 family. Part of the 30S ribosomal subunit. Contacts proteins S4 and S8.

Functionally, with S4 and S12 plays an important role in translational accuracy. Its function is as follows. Located at the back of the 30S subunit body where it stabilizes the conformation of the head with respect to the body. This Sphingopyxis alaskensis (strain DSM 13593 / LMG 18877 / RB2256) (Sphingomonas alaskensis) protein is Small ribosomal subunit protein uS5.